The chain runs to 101 residues: Urease subunit gamma (101 aa).

It belongs to the urease gamma subunit family. In terms of assembly, heterotrimer of UreA (gamma), UreB (beta) and UreC (alpha) subunits. Three heterotrimers associate to form the active enzyme.

The protein localises to the cytoplasm. The enzyme catalyses urea + 2 H2O + H(+) = hydrogencarbonate + 2 NH4(+). It participates in nitrogen metabolism; urea degradation; CO(2) and NH(3) from urea (urease route): step 1/1. In Ureaplasma urealyticum serovar 10 (strain ATCC 33699 / Western), this protein is Urease subunit gamma.